The primary structure comprises 345 residues: DNA-directed RNA polymerases I and III subunit rpac1 (345 aa).

A compositionally biased stretch (polar residues) spans 1 to 11 (MVNKSTTNGVS). Positions 1 to 20 (MVNKSTTNGVSDPNLENKRT) are disordered.

The protein belongs to the archaeal Rpo3/eukaryotic RPB3 RNA polymerase subunit family. Component of the RNA polymerase I (Pol I) and RNA polymerase III (Pol III) complexes consisting of at least 13 and 17 subunits, respectively. Interacts with RPAC19/RPAC2.

The protein localises to the nucleus. Functionally, DNA-dependent RNA polymerase catalyzes the transcription of DNA into RNA using the four ribonucleoside triphosphates as substrates. Common component of RNA polymerases I and III which synthesize ribosomal RNA precursors and small RNAs, such as 5S rRNA and tRNAs, respectively. RPAC1 is part of the Pol core element with the central large cleft and probably a clamp element that moves to open and close the cleft. This is DNA-directed RNA polymerases I and III subunit rpac1 (polr1c) from Dictyostelium discoideum (Social amoeba).